The following is a 226-amino-acid chain: Peroxynitrite isomerase (226 aa).

A GXWXGXG motif is present at residues 21–27; that stretch reads GSWEGQG. Position 191 (His191) interacts with heme b. The tract at residues 201-226 is disordered; sequence SAAEGRLAPGAERPRGAGGRKQGEQS.

This sequence belongs to the nitrobindin family. Homodimer. It depends on heme b as a cofactor.

It catalyses the reaction peroxynitrite = nitrate. The protein operates within nitrogen metabolism. Heme-binding protein able to scavenge peroxynitrite and to protect free L-tyrosine against peroxynitrite-mediated nitration, by acting as a peroxynitrite isomerase that converts peroxynitrite to nitrate. Therefore, this protein likely plays a role in peroxynitrite sensing and in the detoxification of reactive nitrogen and oxygen species (RNS and ROS, respectively). Is able to bind nitric oxide (NO) in vitro, but may act as a sensor of peroxynitrite levels in vivo. The sequence is that of Peroxynitrite isomerase from Micrococcus luteus (strain ATCC 4698 / DSM 20030 / JCM 1464 / CCM 169 / CCUG 5858 / IAM 1056 / NBRC 3333 / NCIMB 9278 / NCTC 2665 / VKM Ac-2230) (Micrococcus lysodeikticus).